The primary structure comprises 168 residues: 6-pyruvoyl tetrahydrobiopterin synthase (168 aa).

Zn(2+) is bound at residue H19. C38 functions as the Proton acceptor in the catalytic mechanism. Positions 44 and 46 each coordinate Zn(2+). Catalysis depends on charge relay system residues H85 and E130. S159 bears the Phosphoserine mark. T161 is modified (phosphothreonine). 3 positions are modified to phosphoserine: S164, S165, and S167.

This sequence belongs to the PTPS family. In terms of assembly, homohexamer formed of two homotrimers in a head to head fashion. Zn(2+) is required as a cofactor.

The catalysed reaction is 7,8-dihydroneopterin 3'-triphosphate = 6-pyruvoyl-5,6,7,8-tetrahydropterin + triphosphate + H(+). The protein operates within cofactor biosynthesis; tetrahydrobiopterin biosynthesis; tetrahydrobiopterin from 7,8-dihydroneopterin triphosphate: step 1/3. Its function is as follows. Required for pigment and biopterin synthesis. The chain is 6-pyruvoyl tetrahydrobiopterin synthase (pr) from Drosophila melanogaster (Fruit fly).